Reading from the N-terminus, the 561-residue chain is (+)-alpha-pinene synthase TPS2FN (561 aa).

Residues Arg276, Asp313, Asp317, Arg455, and Asp458 each contribute to the (2E)-geranyl diphosphate site. Asp313 and Asp317 together coordinate Mg(2+). The short motif at 313–317 (DDIYD) is the DDXXD motif element. Mg(2+) contacts are provided by Asp458, Thr462, and Glu466.

Belongs to the terpene synthase family. Tpsb subfamily. Mg(2+) serves as cofactor. Requires Mn(2+) as cofactor. Expressed in glandular trichomes two to four weeks after flowering onset.

The enzyme catalyses (2E)-geranyl diphosphate = (1R,5R)-alpha-pinene + diphosphate. It carries out the reaction (2E)-geranyl diphosphate = (4S)-limonene + diphosphate. It catalyses the reaction (2E)-geranyl diphosphate = sabinene + diphosphate. The catalysed reaction is (2E)-geranyl diphosphate = beta-phellandrene + diphosphate. The enzyme catalyses (2E)-geranyl diphosphate = camphene + diphosphate. It carries out the reaction (2E)-geranyl diphosphate = isoterpinolene + diphosphate. The protein operates within secondary metabolite biosynthesis; terpenoid biosynthesis. Its pathway is terpene metabolism; (-)-alpha-pinene biosynthesis; (-)-alpha-pinene from geranyl diphosphate: step 1/1. Functionally, involved in monoterpene (C10) olefins biosynthesis, constituants of cannabinoids and terpenoids-rich resins. Catalyzes mainly the conversion of (2E)-geranyl diphosphate to (+)-alpha-pinene, and also produces minor products such as camphene, sabinene, beta-phellandrene, (-)-limonene and isoterpinolene. This Cannabis sativa (Hemp) protein is (+)-alpha-pinene synthase TPS2FN.